The sequence spans 428 residues: Serine--tRNA ligase (428 aa).

Residue 236–238 (TAE) participates in L-serine binding. Position 267–269 (267–269 (RSE)) interacts with ATP. Residue E290 participates in L-serine binding. 354 to 357 (EISS) is an ATP binding site. S388 provides a ligand contact to L-serine.

The protein belongs to the class-II aminoacyl-tRNA synthetase family. Type-1 seryl-tRNA synthetase subfamily. As to quaternary structure, homodimer. The tRNA molecule binds across the dimer.

It localises to the cytoplasm. It catalyses the reaction tRNA(Ser) + L-serine + ATP = L-seryl-tRNA(Ser) + AMP + diphosphate + H(+). The catalysed reaction is tRNA(Sec) + L-serine + ATP = L-seryl-tRNA(Sec) + AMP + diphosphate + H(+). It participates in aminoacyl-tRNA biosynthesis; selenocysteinyl-tRNA(Sec) biosynthesis; L-seryl-tRNA(Sec) from L-serine and tRNA(Sec): step 1/1. Catalyzes the attachment of serine to tRNA(Ser). Is also able to aminoacylate tRNA(Sec) with serine, to form the misacylated tRNA L-seryl-tRNA(Sec), which will be further converted into selenocysteinyl-tRNA(Sec). The chain is Serine--tRNA ligase from Psychrobacter sp. (strain PRwf-1).